A 146-amino-acid polypeptide reads, in one-letter code: 3-dehydroquinate dehydratase (146 aa).

The active-site Proton acceptor is Y22. Substrate-binding residues include N73, H79, and D86. H99 (proton donor) is an active-site residue. Substrate contacts are provided by residues L100–S101 and R110.

Belongs to the type-II 3-dehydroquinase family. In terms of assembly, homododecamer.

The catalysed reaction is 3-dehydroquinate = 3-dehydroshikimate + H2O. Its pathway is metabolic intermediate biosynthesis; chorismate biosynthesis; chorismate from D-erythrose 4-phosphate and phosphoenolpyruvate: step 3/7. Functionally, catalyzes a trans-dehydration via an enolate intermediate. The chain is 3-dehydroquinate dehydratase from Parasynechococcus marenigrum (strain WH8102).